The primary structure comprises 495 residues: Maturase K (495 aa).

Belongs to the intron maturase 2 family. MatK subfamily.

It is found in the plastid. Its subcellular location is the chloroplast. Functionally, usually encoded in the trnK tRNA gene intron. Probably assists in splicing its own and other chloroplast group II introns. This Torreya californica (California nutmeg) protein is Maturase K.